The chain runs to 718 residues: Acetolactate synthase, mitochondrial (718 aa).

Disordered stretches follow at residues 1-53 (MLTR…YDTP) and 75-99 (QSSA…QAAP). Over residues 32–45 (RYSNNIHTSSTQNA) the composition is skewed to polar residues. Residues 76-99 (SSASTAAASPAVRPQPAQHFQAAP) are compositionally biased toward low complexity. E173 is a thiamine diphosphate binding site. Residue R275 participates in FAD binding. Residues 301-326 (VQPGHSPYLPSNPLNPSSQPSDPLPG) form a disordered region. Positions 306–325 (SPYLPSNPLNPSSQPSDPLP) are enriched in low complexity. Residues 397–418 (HGSA…LGVR) and 449–468 (EIQP…VLGD) contribute to the FAD site. The tract at residues 541–621 (QHQMWACQYY…VKVLLFNNEF (81 aa)) is thiamine pyrophosphate binding. Positions 592 and 619 each coordinate Mg(2+).

It belongs to the TPP enzyme family. Mg(2+) is required as a cofactor. The cofactor is thiamine diphosphate.

Its subcellular location is the mitochondrion. It carries out the reaction 2 pyruvate + H(+) = (2S)-2-acetolactate + CO2. The protein operates within amino-acid biosynthesis; L-isoleucine biosynthesis; L-isoleucine from 2-oxobutanoate: step 1/4. Its pathway is amino-acid biosynthesis; L-valine biosynthesis; L-valine from pyruvate: step 1/4. This Cryptococcus neoformans var. grubii serotype A (strain H99 / ATCC 208821 / CBS 10515 / FGSC 9487) (Filobasidiella neoformans var. grubii) protein is Acetolactate synthase, mitochondrial (ILV2).